Here is a 363-residue protein sequence, read N- to C-terminus: Ribosome-binding ATPase YchF (363 aa).

The OBG-type G domain maps to 3 to 257 (FKCGFVGLPN…VSAYDHLSLK (255 aa)). 12–17 (NVGKST) provides a ligand contact to ATP. 2 residues coordinate Mg(2+): Ser-16 and Thr-36. The 84-residue stretch at 278–361 (NLITFFTAGK…CDGDIIHVLY (84 aa)) folds into the TGS domain.

This sequence belongs to the TRAFAC class OBG-HflX-like GTPase superfamily. OBG GTPase family. YchF/OLA1 subfamily. Requires Mg(2+) as cofactor.

Functionally, ATPase that binds to both the 70S ribosome and the 50S ribosomal subunit in a nucleotide-independent manner. This is Ribosome-binding ATPase YchF from Buchnera aphidicola subsp. Baizongia pistaciae (strain Bp).